A 674-amino-acid chain; its full sequence is Methionine--tRNA ligase (674 aa).

Residues 12–22 (PYANGPIHLGH) carry the 'HIGH' region motif. Zn(2+)-binding residues include cysteine 143, cysteine 146, cysteine 156, and cysteine 159. The 'KMSKS' region motif lies at 328–332 (KMSKS). Lysine 331 contributes to the ATP binding site. A tRNA-binding domain is found at 573–674 (SFAKLDLRIA…EGARPGMRVK (102 aa)).

It belongs to the class-I aminoacyl-tRNA synthetase family. MetG type 1 subfamily. Homodimer. The cofactor is Zn(2+).

It localises to the cytoplasm. The catalysed reaction is tRNA(Met) + L-methionine + ATP = L-methionyl-tRNA(Met) + AMP + diphosphate. In terms of biological role, is required not only for elongation of protein synthesis but also for the initiation of all mRNA translation through initiator tRNA(fMet) aminoacylation. The protein is Methionine--tRNA ligase of Nitrosococcus oceani (strain ATCC 19707 / BCRC 17464 / JCM 30415 / NCIMB 11848 / C-107).